We begin with the raw amino-acid sequence, 237 residues long: uncharacterized protein (237 aa).

An N-terminal signal peptide occupies residues 1–28 (MNRPLLSVAGSLFVAAWALYIFSCFQHG). Residues 52-96 (NARDTAAHPSDTADNTSGSSTTTDPRSHGNAPPAPVGGAAQTHTQ) form a disordered region. Over residues 63-75 (TADNTSGSSTTTD) the composition is skewed to polar residues.

This is an uncharacterized protein from Treponema pallidum (strain Nichols).